Consider the following 653-residue polypeptide: DNA mismatch repair protein MutL (653 aa).

The tract at residues 368 to 413 (EVSQVAEPEGKTDITNKKETETKEKAEKKENKQEEKEEKTSAPEYV) is disordered. Over residues 375 to 408 (PEGKTDITNKKETETKEKAEKKENKQEEKEEKTS) the composition is skewed to basic and acidic residues.

It belongs to the DNA mismatch repair MutL/HexB family.

In terms of biological role, this protein is involved in the repair of mismatches in DNA. It is required for dam-dependent methyl-directed DNA mismatch repair. May act as a 'molecular matchmaker', a protein that promotes the formation of a stable complex between two or more DNA-binding proteins in an ATP-dependent manner without itself being part of a final effector complex. This is DNA mismatch repair protein MutL from Lactobacillus delbrueckii subsp. bulgaricus (strain ATCC 11842 / DSM 20081 / BCRC 10696 / JCM 1002 / NBRC 13953 / NCIMB 11778 / NCTC 12712 / WDCM 00102 / Lb 14).